Here is an 881-residue protein sequence, read N- to C-terminus: Phosphoenolpyruvate carboxylase (881 aa).

Residues H139 and K544 contribute to the active site.

Belongs to the PEPCase type 1 family. Mg(2+) is required as a cofactor.

It catalyses the reaction oxaloacetate + phosphate = phosphoenolpyruvate + hydrogencarbonate. Its function is as follows. Forms oxaloacetate, a four-carbon dicarboxylic acid source for the tricarboxylic acid cycle. The polypeptide is Phosphoenolpyruvate carboxylase (Marinobacter nauticus (strain ATCC 700491 / DSM 11845 / VT8) (Marinobacter aquaeolei)).